The primary structure comprises 244 residues: 3-deoxy-manno-octulosonate cytidylyltransferase (244 aa).

The protein belongs to the KdsB family.

It localises to the cytoplasm. The catalysed reaction is 3-deoxy-alpha-D-manno-oct-2-ulosonate + CTP = CMP-3-deoxy-beta-D-manno-octulosonate + diphosphate. The protein operates within nucleotide-sugar biosynthesis; CMP-3-deoxy-D-manno-octulosonate biosynthesis; CMP-3-deoxy-D-manno-octulosonate from 3-deoxy-D-manno-octulosonate and CTP: step 1/1. It participates in bacterial outer membrane biogenesis; lipopolysaccharide biosynthesis. In terms of biological role, activates KDO (a required 8-carbon sugar) for incorporation into bacterial lipopolysaccharide in Gram-negative bacteria. The protein is 3-deoxy-manno-octulosonate cytidylyltransferase of Dichelobacter nodosus (strain VCS1703A).